The primary structure comprises 149 residues: Nucleoside diphosphate kinase (149 aa).

6 residues coordinate ATP: lysine 9, phenylalanine 57, arginine 85, threonine 91, arginine 102, and asparagine 112. The Pros-phosphohistidine intermediate role is filled by histidine 115.

Belongs to the NDK family. In terms of assembly, homotetramer. Mg(2+) serves as cofactor.

The protein localises to the cytoplasm. It catalyses the reaction a 2'-deoxyribonucleoside 5'-diphosphate + ATP = a 2'-deoxyribonucleoside 5'-triphosphate + ADP. The enzyme catalyses a ribonucleoside 5'-diphosphate + ATP = a ribonucleoside 5'-triphosphate + ADP. Functionally, major role in the synthesis of nucleoside triphosphates other than ATP. The ATP gamma phosphate is transferred to the NDP beta phosphate via a ping-pong mechanism, using a phosphorylated active-site intermediate. This chain is Nucleoside diphosphate kinase, found in Carboxydothermus hydrogenoformans (strain ATCC BAA-161 / DSM 6008 / Z-2901).